The chain runs to 657 residues: Methionine--tRNA ligase (657 aa).

The 'HIGH' region motif lies at 13 to 23 (YYPSGNLHIGH). The short motif at 308-312 (KMSKS) is the 'KMSKS' region element. Residue Lys311 coordinates ATP. Residues 557–657 (DFDKVEIKAA…SAIPNGAVIK (101 aa)) enclose the tRNA-binding domain.

Belongs to the class-I aminoacyl-tRNA synthetase family. MetG type 2B subfamily. Homodimer.

The protein resides in the cytoplasm. It catalyses the reaction tRNA(Met) + L-methionine + ATP = L-methionyl-tRNA(Met) + AMP + diphosphate. In terms of biological role, is required not only for elongation of protein synthesis but also for the initiation of all mRNA translation through initiator tRNA(fMet) aminoacylation. This Staphylococcus aureus (strain MRSA252) protein is Methionine--tRNA ligase.